Consider the following 307-residue polypeptide: tRNA-cytidine(32) 2-sulfurtransferase (307 aa).

The PP-loop motif signature appears at 44–49 (SGGKDS). [4Fe-4S] cluster contacts are provided by C119, C122, and C210.

Belongs to the TtcA family. In terms of assembly, homodimer. Mg(2+) serves as cofactor. The cofactor is [4Fe-4S] cluster.

The protein resides in the cytoplasm. The enzyme catalyses cytidine(32) in tRNA + S-sulfanyl-L-cysteinyl-[cysteine desulfurase] + AH2 + ATP = 2-thiocytidine(32) in tRNA + L-cysteinyl-[cysteine desulfurase] + A + AMP + diphosphate + H(+). Its pathway is tRNA modification. Its function is as follows. Catalyzes the ATP-dependent 2-thiolation of cytidine in position 32 of tRNA, to form 2-thiocytidine (s(2)C32). The sulfur atoms are provided by the cysteine/cysteine desulfurase (IscS) system. In Aliivibrio fischeri (strain ATCC 700601 / ES114) (Vibrio fischeri), this protein is tRNA-cytidine(32) 2-sulfurtransferase.